Consider the following 347-residue polypeptide: MDPRKIQLPREIYTGPGVIEDTGRICRDLRFEGRAMVVTGPRTLQIAGEAAIESLQAEGFEVDQVTVDDATMASVRNVQDGLDGVSVVLGVGGGKVIDVAKMSATLEGLHFISVPTAASHDGIASPRASIRNGEGTASLEASSPIGVIADTEIISRAPFRLLASGCADIISNYTAIMDWKLAHRLLNERYSESAAALSLMTAKMIIKSADAIKEGLEESARLAVKSLISSGIAISIAGSSRPASGSEHKFSHALDMIAPKPALHGEQCGVGTIMMMHLHGGDWQFIRDALARINAPTTAAELGIDPEYIIEALTMAHNIRRERYTILGDRGLTREAAERLAKITEVI.

Residues 94-98 (GKVID) and 116-119 (TAAS) each bind NAD(+). Asp-121 provides a ligand contact to substrate. Ser-125 contributes to the NAD(+) binding site. Position 168 (Asp-168) interacts with substrate. The Zn(2+) site is built by Asp-168 and His-248. His-252 serves as a coordination point for substrate. His-264 contacts Zn(2+).

It belongs to the glycerol-1-phosphate dehydrogenase family. In terms of assembly, homooctamer. The cofactor is Zn(2+).

The protein localises to the cytoplasm. It catalyses the reaction sn-glycerol 1-phosphate + NAD(+) = dihydroxyacetone phosphate + NADH + H(+). The enzyme catalyses sn-glycerol 1-phosphate + NADP(+) = dihydroxyacetone phosphate + NADPH + H(+). Its pathway is membrane lipid metabolism; glycerophospholipid metabolism. With respect to regulation, partially inhibited by divalent metal cations such as Co(2+), Cu(2+) and Ni(2+). Functionally, catalyzes the NAD(P)H-dependent reduction of dihydroxyacetonephosphate (DHAP or glycerone phosphate) to glycerol 1-phosphate (G1P). The G1P thus generated is used as the glycerophosphate backbone of phospholipids in the cellular membranes of Archaea. Is also able to catalyze the reverse reaction, i.e. the NAD(P)(+)-dependent oxidation of G1P but not of G3P. Is not active toward glycerol, dihydroxyacetone, glyceraldehyde-3-phosphate, glyceraldehyde and glycerol-2-phosphate. The polypeptide is Glycerol-1-phosphate dehydrogenase [NAD(P)+] (egsA) (Methanothermobacter thermautotrophicus (strain ATCC 29096 / DSM 1053 / JCM 10044 / NBRC 100330 / Delta H) (Methanobacterium thermoautotrophicum)).